Consider the following 606-residue polypeptide: Leucine-rich repeat and immunoglobulin-like domain-containing nogo receptor-interacting protein 2 (606 aa).

The N-terminal stretch at 1-27 (MLHTAISCWQPFLGLAVVLIFMGSTIG) is a signal peptide. The region spanning 28–57 (CPARCECSAQNKSVSCHRRRLIAIPEGIPI) is the LRRNT domain. The Extracellular portion of the chain corresponds to 28–545 (CPARCECSAQ…LDLKTILVST (518 aa)). Asparagine 38 carries an N-linked (GlcNAc...) asparagine glycan. LRR repeat units lie at residues 58 to 79 (ETKILDLSKNRLKSVNPEEFIS), 82 to 103 (LLEEIDLSDNIIANVEPGAFNN), 106 to 127 (NLRSLRLKGNRLKLVPLGVFTG), 130 to 151 (NLTKLDISENKIVILLDYMFQD), 154 to 175 (NLKSLEVGDNDLVYISHRAFSG), 178 to 199 (SLEQLTLEKCNLTAVPTEALSH), 202 to 223 (SLISLHLKHLNINNMPVYAFKR), 226 to 247 (HLKHLEIDYWPLLDMMPANSLY), 250 to 271 (NLTSLSVTNTNLSTVPFLAFKH), 274 to 295 (YLTHLNLSYNPISTIEAGMFSD), 298 to 319 (RLQELHIVGAQLRTIEPHSFQG), and 322 to 343 (FLRVLNVSQNLLETLEENVFSS). A glycan (N-linked (GlcNAc...) asparagine) is linked at asparagine 130. A glycan (N-linked (GlcNAc...) asparagine) is linked at asparagine 188. N-linked (GlcNAc...) asparagine glycosylation occurs at asparagine 279. N-linked (GlcNAc...) asparagine glycosylation occurs at asparagine 327. Positions 355–409 (NPLACDCRLLWILQRQPTLQFGGQQPMCAGPDTIRERSFKDFHSTALSFYFTCKK) constitute an LRRCT domain. One can recognise an Ig-like C2-type domain in the interval 410–499 (PKIREKKLQH…GNDTFTASLT (90 aa)). An intrachain disulfide couples cysteine 432 to cysteine 483. A helical membrane pass occupies residues 546–566 (AMGCFTFLGVVLFCFLLLFVW). Residues 567-606 (SRGKGKHKNSIDLEYVPRKNNGAVVEGEVAGPRRFNMKMI) lie on the Cytoplasmic side of the membrane.

Its subcellular location is the membrane. This chain is Leucine-rich repeat and immunoglobulin-like domain-containing nogo receptor-interacting protein 2 (LINGO2), found in Homo sapiens (Human).